A 190-amino-acid polypeptide reads, in one-letter code: Elongation factor P 2 (190 aa).

It belongs to the elongation factor P family.

It localises to the cytoplasm. The protein operates within protein biosynthesis; polypeptide chain elongation. Involved in peptide bond synthesis. Stimulates efficient translation and peptide-bond synthesis on native or reconstituted 70S ribosomes in vitro. Probably functions indirectly by altering the affinity of the ribosome for aminoacyl-tRNA, thus increasing their reactivity as acceptors for peptidyl transferase. This is Elongation factor P 2 (efp2) from Chlamydia caviae (strain ATCC VR-813 / DSM 19441 / 03DC25 / GPIC) (Chlamydophila caviae).